Reading from the N-terminus, the 323-residue chain is uncharacterized protein (323 aa).

Residues 16–95 (QRIDQFCLKI…DKLKIIFEDE (80 aa)) form the S4 RNA-binding domain. Aspartate 148 is an active-site residue.

This sequence belongs to the pseudouridine synthase RluA family.

It carries out the reaction a uridine in RNA = a pseudouridine in RNA. This is an uncharacterized protein from Mycoplasma genitalium (strain ATCC 33530 / DSM 19775 / NCTC 10195 / G37) (Mycoplasmoides genitalium).